We begin with the raw amino-acid sequence, 340 residues long: Olfactory receptor 5T3 (340 aa).

At 1-55 (MDSTFTGYNLYNLQVKTEMDKLSSGLDIYRNPLKNKTEVTMFILTGFTDDFELQV) the chain is on the extracellular side. A glycan (N-linked (GlcNAc...) asparagine) is linked at N35. A helical membrane pass occupies residues 56–76 (FLFLLFFAIYLFTLIGNLGLV). At 77-84 (VLVIEDSW) the chain is on the cytoplasmic side. Residues 85-105 (LHNPMYYFLSVLSFLDACYST) traverse the membrane as a helical segment. Residues 106–129 (VVTPKMLVNFLAKNKSISFIGCAT) lie on the Extracellular side of the membrane. N-linked (GlcNAc...) asparagine glycosylation is present at N119. C127 and C219 form a disulfide bridge. A helical transmembrane segment spans residues 130-150 (QMLLFVTFGTTECFLLAAMAY). Over 151–169 (DHYVAIYNPLLYSVSMSPR) the chain is Cytoplasmic. A helical transmembrane segment spans residues 170–190 (VYVPLITASYVAGILHATIHI). The Extracellular segment spans residues 191–226 (VATFSLSFCGSNEIRHVFCDMPPLLAISCSDTHTNQ). Residues 227-247 (LLLFYFVGSIEIVTILIVLIS) form a helical membrane-spanning segment. Topologically, residues 248–267 (CDFILLSILKMHSAKGRQKA) are cytoplasmic. Residues 268–288 (FSTCGSHLTGVTIYHGTILVS) form a helical membrane-spanning segment. Over 289–301 (YMRPSSSYASDHD) the chain is Extracellular. Residues 302–322 (IIVSIFYTIVIPKLNPIIYSL) form a helical membrane-spanning segment. Residues 323–340 (RNKEVKKAVKKMLKLVYK) lie on the Cytoplasmic side of the membrane.

The protein belongs to the G-protein coupled receptor 1 family.

The protein localises to the cell membrane. Functionally, odorant receptor. This chain is Olfactory receptor 5T3 (OR5T3), found in Homo sapiens (Human).